A 401-amino-acid chain; its full sequence is Argininosuccinate synthase (401 aa).

ATP is bound at residue 8–16 (AYSGGLDTS). Tyr85 provides a ligand contact to L-citrulline. Residue Gly115 participates in ATP binding. 3 residues coordinate L-aspartate: Thr117, Asn121, and Asp122. L-citrulline is bound at residue Asn121. L-citrulline-binding residues include Arg125, Ser173, Ser182, Glu258, and Tyr270.

The protein belongs to the argininosuccinate synthase family. Type 1 subfamily. Homotetramer.

Its subcellular location is the cytoplasm. The enzyme catalyses L-citrulline + L-aspartate + ATP = 2-(N(omega)-L-arginino)succinate + AMP + diphosphate + H(+). Its pathway is amino-acid biosynthesis; L-arginine biosynthesis; L-arginine from L-ornithine and carbamoyl phosphate: step 2/3. This chain is Argininosuccinate synthase, found in Staphylococcus saprophyticus subsp. saprophyticus (strain ATCC 15305 / DSM 20229 / NCIMB 8711 / NCTC 7292 / S-41).